We begin with the raw amino-acid sequence, 332 residues long: Ribosomal RNA small subunit methyltransferase C (332 aa).

The protein belongs to the methyltransferase superfamily. RsmC family. As to quaternary structure, monomer.

It is found in the cytoplasm. It catalyses the reaction guanosine(1207) in 16S rRNA + S-adenosyl-L-methionine = N(2)-methylguanosine(1207) in 16S rRNA + S-adenosyl-L-homocysteine + H(+). Functionally, specifically methylates the guanine in position 1207 of 16S rRNA in the 30S particle. The polypeptide is Ribosomal RNA small subunit methyltransferase C (Pseudomonas entomophila (strain L48)).